A 108-amino-acid polypeptide reads, in one-letter code: UPF0145 protein LCA_1282 (108 aa).

Belongs to the UPF0145 family.

The protein is UPF0145 protein LCA_1282 of Latilactobacillus sakei subsp. sakei (strain 23K) (Lactobacillus sakei subsp. sakei).